Here is a 467-residue protein sequence, read N- to C-terminus: MDISLDQLWDEALCHLQVQLSRPTFEAWIKTARAESLVDNRLTICTPSEWARGWLQKHYASTITEVVQRVAGIPLQVEFSVSPHASVEAEPPSRAISPTSGRAGSLPASTTLGLEVGGSLPMRAPDLNPKYSFSRFVVGPNNRMAHAAALAVADKPGRAYNPLFLCGGVGLGKTHLMQAIGHYQLEANPQAKVFYVSTERFTNDLIDAIRRDSMQSFREHYRDVDILLVDDVQFIEGKEYTQEEFFHTFNTLHESGKQIVLAADRSPHLIPRLQERLCSRFSMGLIAEIQSPDIETRMAILKKKAEYEGMNLPADVIEYIATTYTSNIRELEGALIRAVAYVSISGLPMSVETIQPILNPPSEPKEITADMITDVVCEEFGIDRDSLLGSSRKRDISQARQIAMFLMRHYTNLSLPKIGDYFGGKDHTTVLYSCEKVSQLQRQSLQFERQLQKLVERLRVVANSRSS.

The interval Met1 to His84 is domain I, interacts with DnaA modulators. The interval His84–Pro125 is domain II. Residues Ala89–Ala108 form a disordered region. Over residues Ile96 to Ala108 the composition is skewed to polar residues. The tract at residues Asp126–Val342 is domain III, AAA+ region. ATP contacts are provided by Gly170, Gly172, Lys173, and Thr174. The tract at residues Ser343–Ser467 is domain IV, binds dsDNA.

This sequence belongs to the DnaA family. In terms of assembly, oligomerizes as a right-handed, spiral filament on DNA at oriC.

The protein resides in the cytoplasm. In terms of biological role, plays an essential role in the initiation and regulation of chromosomal replication. ATP-DnaA binds to the origin of replication (oriC) to initiate formation of the DNA replication initiation complex once per cell cycle. Binds the DnaA box (a 9 base pair repeat at the origin) and separates the double-stranded (ds)DNA. Forms a right-handed helical filament on oriC DNA; dsDNA binds to the exterior of the filament while single-stranded (ss)DNA is stabiized in the filament's interior. The ATP-DnaA-oriC complex binds and stabilizes one strand of the AT-rich DNA unwinding element (DUE), permitting loading of DNA polymerase. After initiation quickly degrades to an ADP-DnaA complex that is not apt for DNA replication. Binds acidic phospholipids. This Synechococcus sp. (strain JA-2-3B'a(2-13)) (Cyanobacteria bacterium Yellowstone B-Prime) protein is Chromosomal replication initiator protein DnaA.